We begin with the raw amino-acid sequence, 475 residues long: Aspartyl/glutamyl-tRNA(Asn/Gln) amidotransferase subunit B (475 aa).

This sequence belongs to the GatB/GatE family. GatB subfamily. Heterotrimer of A, B and C subunits.

It catalyses the reaction L-glutamyl-tRNA(Gln) + L-glutamine + ATP + H2O = L-glutaminyl-tRNA(Gln) + L-glutamate + ADP + phosphate + H(+). It carries out the reaction L-aspartyl-tRNA(Asn) + L-glutamine + ATP + H2O = L-asparaginyl-tRNA(Asn) + L-glutamate + ADP + phosphate + 2 H(+). Its function is as follows. Allows the formation of correctly charged Asn-tRNA(Asn) or Gln-tRNA(Gln) through the transamidation of misacylated Asp-tRNA(Asn) or Glu-tRNA(Gln) in organisms which lack either or both of asparaginyl-tRNA or glutaminyl-tRNA synthetases. The reaction takes place in the presence of glutamine and ATP through an activated phospho-Asp-tRNA(Asn) or phospho-Glu-tRNA(Gln). In Staphylococcus epidermidis (strain ATCC 12228 / FDA PCI 1200), this protein is Aspartyl/glutamyl-tRNA(Asn/Gln) amidotransferase subunit B.